The following is a 205-amino-acid chain: uncharacterized protein (205 aa).

This is an uncharacterized protein from Bacillus subtilis (strain 168).